A 373-amino-acid polypeptide reads, in one-letter code: 4-hydroxy-3-methylbut-2-en-1-yl diphosphate synthase (flavodoxin) (373 aa).

4 residues coordinate [4Fe-4S] cluster: cysteine 270, cysteine 273, cysteine 305, and glutamate 312.

Belongs to the IspG family. The cofactor is [4Fe-4S] cluster.

The enzyme catalyses (2E)-4-hydroxy-3-methylbut-2-enyl diphosphate + oxidized [flavodoxin] + H2O + 2 H(+) = 2-C-methyl-D-erythritol 2,4-cyclic diphosphate + reduced [flavodoxin]. The protein operates within isoprenoid biosynthesis; isopentenyl diphosphate biosynthesis via DXP pathway; isopentenyl diphosphate from 1-deoxy-D-xylulose 5-phosphate: step 5/6. Functionally, converts 2C-methyl-D-erythritol 2,4-cyclodiphosphate (ME-2,4cPP) into 1-hydroxy-2-methyl-2-(E)-butenyl 4-diphosphate. The chain is 4-hydroxy-3-methylbut-2-en-1-yl diphosphate synthase (flavodoxin) from Klebsiella pneumoniae subsp. pneumoniae (strain ATCC 700721 / MGH 78578).